Consider the following 557-residue polypeptide: Formate--tetrahydrofolate ligase (557 aa).

Residue 65 to 72 (TPAGEGKT) participates in ATP binding.

It belongs to the formate--tetrahydrofolate ligase family.

It carries out the reaction (6S)-5,6,7,8-tetrahydrofolate + formate + ATP = (6R)-10-formyltetrahydrofolate + ADP + phosphate. The protein operates within one-carbon metabolism; tetrahydrofolate interconversion. The sequence is that of Formate--tetrahydrofolate ligase from Acidiphilium cryptum (strain JF-5).